Here is a 346-residue protein sequence, read N- to C-terminus: NADH-ubiquinone oxidoreductase chain 2 (346 aa).

11 helical membrane passes run 3–23 (PLILTIILMTVFLGTMIVMAS), 25–45 (HWLMIWIGFEMNLLAIIPILM), 59–79 (YFLTQATASMLLMMAIIINLM), 96–116 (IIMTLALAMKLGLTPFHFWVP), 122–142 (ISLTSGLILLTWQKLAPMSIL), 149–169 (INLNILLTMAVLSILVGGWGG), 178–198 (IMAYSSIAHMGWMAAILVYNP), 200–220 (LTMLNMLIYIMMTLTMFMLFI), 237–257 (APLITTLILITLLSMGGLPPL), 274–294 (SSIILPTLMAIMALLNLYFYM), and 322–342 (ITLLPPLIIASSLLLPLTPML).

This sequence belongs to the complex I subunit 2 family. Core subunit of respiratory chain NADH dehydrogenase (Complex I) which is composed of 45 different subunits. Interacts with TMEM242.

The protein localises to the mitochondrion inner membrane. It catalyses the reaction a ubiquinone + NADH + 5 H(+)(in) = a ubiquinol + NAD(+) + 4 H(+)(out). Core subunit of the mitochondrial membrane respiratory chain NADH dehydrogenase (Complex I) which catalyzes electron transfer from NADH through the respiratory chain, using ubiquinone as an electron acceptor. Essential for the catalytic activity and assembly of complex I. This chain is NADH-ubiquinone oxidoreductase chain 2, found in Equus asinus (Donkey).